We begin with the raw amino-acid sequence, 391 residues long: Deoxyguanosinetriphosphate triphosphohydrolase-like protein (391 aa).

Residues 62-198 (RLTHSLEVST…ASLADDISYI (137 aa)) enclose the HD domain.

The protein belongs to the dGTPase family. Type 2 subfamily.

This chain is Deoxyguanosinetriphosphate triphosphohydrolase-like protein, found in Rickettsia akari (strain Hartford).